The sequence spans 269 residues: Putative 12-oxophytodienoate reductase-like protein 2A (269 aa).

Residues 28-30 and Q103 contribute to the FMN site; that span reads PLT. Residue 175 to 178 participates in substrate binding; the sequence is HGAH. The active-site Proton donor is the Y180. R227 lines the FMN pocket.

The protein belongs to the NADH:flavin oxidoreductase/NADH oxidase family. Requires FMN as cofactor.

Putative oxophytodienoate reductase that may be involved in the biosynthesis or metabolism of oxylipin signaling molecules. The sequence is that of Putative 12-oxophytodienoate reductase-like protein 2A from Arabidopsis thaliana (Mouse-ear cress).